The chain runs to 205 residues: GTP cyclohydrolase-2 (205 aa).

Residue 49–53 (RLHSE) participates in GTP binding. Residues cysteine 54, cysteine 65, and cysteine 67 each coordinate Zn(2+). Residues glutamine 70, 92–94 (EGR), and threonine 114 contribute to the GTP site. The Proton acceptor role is filled by aspartate 126. The active-site Nucleophile is arginine 128. The GTP site is built by threonine 149 and lysine 154.

This sequence belongs to the GTP cyclohydrolase II family. It depends on Zn(2+) as a cofactor.

The enzyme catalyses GTP + 4 H2O = 2,5-diamino-6-hydroxy-4-(5-phosphoribosylamino)-pyrimidine + formate + 2 phosphate + 3 H(+). It participates in cofactor biosynthesis; riboflavin biosynthesis; 5-amino-6-(D-ribitylamino)uracil from GTP: step 1/4. Catalyzes the conversion of GTP to 2,5-diamino-6-ribosylamino-4(3H)-pyrimidinone 5'-phosphate (DARP), formate and pyrophosphate. The protein is GTP cyclohydrolase-2 of Pseudomonas putida (strain ATCC 700007 / DSM 6899 / JCM 31910 / BCRC 17059 / LMG 24140 / F1).